A 1268-amino-acid polypeptide reads, in one-letter code: SR-related and CTD-associated factor 8 (1268 aa).

One can recognise a CID domain in the interval 1 to 139; it reads MEAVKTFNSE…PLLDMAAGIP (139 aa). T6 bears the Phosphothreonine mark. Residue K18 forms a Glycyl lysine isopeptide (Lys-Gly) (interchain with G-Cter in SUMO1) linkage. Basic and acidic residues predominate over residues 270 to 283; sequence GEDSEHSEESKKEM. 3 disordered regions span residues 270 to 290, 322 to 355, and 385 to 469; these read GEDS…QLSH, QQQP…QQHF, and EIFE…PVRS. Position 273 is a phosphoserine (S273). Over residues 327-354 the composition is skewed to polar residues; the sequence is KVTPQDSQEGTFGSEHSASPSQGSSQQH. Residues 394 to 443 are compositionally biased toward basic residues; it reads VAVRSRSRTHSRSRSRSPRKRRSRSRSGSRKRKHRKRSRSHSREKKRKAS. Residues 447 to 461 show a composition bias toward basic and acidic residues; that stretch reads SSERRAREREKERQK. The RRM domain maps to 477 to 551; that stretch reads TTLWVGQVDK…KVIKIAWALN (75 aa). S617 carries the post-translational modification Phosphoserine. The disordered stretch occupies residues 776–807; it reads QIPSGENTRPVIPSDIPSSAAMLAQPPGASST. R915, R925, and R936 each carry asymmetric dimethylarginine. Disordered stretches follow at residues 984–1012 and 1040–1065; these read PGRP…EGDR and RLDP…PVDM. Residue R1071 is modified to Asymmetric dimethylarginine. Residues 1199 to 1268 are disordered; the sequence is ATSQRKGDNV…VVESTETEGT (70 aa). Residues 1249–1262 are compositionally biased toward low complexity; sequence GTVAGVESEAVVES.

As to quaternary structure, interacts with POLR2A; via C-terminal heptapeptide repeat domain (CTD) phosphorylated at 'Ser-2' and 'Ser-5'. Identified in a complex with CDC5L and other spliceosomal proteins.

The protein resides in the nucleus. It is found in the nucleus matrix. In terms of biological role, anti-terminator protein required to prevent early mRNA termination during transcription. Together with SCAF4, acts by suppressing the use of early, alternative poly(A) sites, thereby preventing the accumulation of non-functional truncated proteins. Mechanistically, associates with the phosphorylated C-terminal heptapeptide repeat domain (CTD) of the largest RNA polymerase II subunit (POLR2A), and subsequently binds nascent RNA upstream of early polyadenylation sites to prevent premature mRNA transcript cleavage and polyadenylation. Independently of SCAF4, also acts as a positive regulator of transcript elongation. The protein is SR-related and CTD-associated factor 8 of Mus musculus (Mouse).